A 266-amino-acid polypeptide reads, in one-letter code: Type II iodothyronine deiodinase (266 aa).

Topologically, residues 1–9 (MGLLSVDLL) are lumenal. A helical; Signal-anchor for type III membrane protein transmembrane segment spans residues 10-34 (ITLQILPVFFSNCLFLALYDSVILL). The Cytoplasmic segment spans residues 35–266 (KHVALLLSRS…KNFSKRUILD (232 aa)). Residue Sec-130 is part of the active site. 2 non-standard amino acids (selenocysteine) are found at residues Sec-130 and Sec-263.

The protein belongs to the iodothyronine deiodinase family. As to quaternary structure, predominantly monomer. Can form homodimers but homodimerization is not essential for enzyme activity. Interacts with USP20 and USP33. Interacts with MARCHF6. Ubiquitinated by MARCHF6, leading to its degradation by the proteasome. Deubiquitinated by USP20 and USP33. Expressed in mammary gland and in brain.

Its subcellular location is the endoplasmic reticulum membrane. It catalyses the reaction 3,3',5-triiodo-L-thyronine + iodide + A + H(+) = L-thyroxine + AH2. It carries out the reaction 3,3'-diiodo-L-thyronine + iodide + A + H(+) = 3,3',5'-triiodo-L-thyronine + AH2. The enzyme catalyses 3'-iodo-L-thyronine + iodide + A + H(+) = 3',5'-diiodo-L-thyronine + AH2. The catalysed reaction is 3,3'-diiodothyronamine + iodide + A + H(+) = 3,3',5'-triiodothyronamine + AH2. It catalyses the reaction 3'-iodothyronamine + iodide + A + H(+) = 3',5'-diiodothyronamine + AH2. Its function is as follows. Plays a crucial role in the metabolism of thyroid hormones (TH) and has specific roles in TH activation and inactivation by deiodination. Catalyzes the deiodination of L-thyroxine (T4) to 3,5,3'-triiodothyronine (T3) and 3,3',5'-triiodothyronine (rT3) to 3,3'-diiodothyronine (3,3'-T2) via outer-ring deiodination (ORD). Catalyzes the deiodination of 3',5'-diiodothyronine (3',5'-T2) to 3'-monoiodothyronine (3'-T1) via ORD. Catalyzes the phenolic ring deiodinations of 3,3',5'-triiodothyronamine and 3',5'- diiodothyronamine. This is Type II iodothyronine deiodinase (Dio2) from Mus musculus (Mouse).